A 94-amino-acid chain; its full sequence is MTLFSSISSISNPMTNSKSRISSFGSGTSMGSNSIACGGGCGGGSGGILGLGLGLGLNLFGGSRGACGGNSGSSNPGNGPCSGGKCCGGSCCGI.

The segment at 1-25 (MTLFSSISSISNPMTNSKSRISSFG) is disordered.

The protein belongs to the hssA/B family.

This is HssA/B-like protein 51 (hssl51) from Dictyostelium discoideum (Social amoeba).